The primary structure comprises 723 residues: Probable C-mannosyltransferase DPY19L4 (723 aa).

Residues 1–33 form a disordered region; that stretch reads MAEEEGPPVELRQRKKPKSSENKESAKEEKISD. Position 2 is an N-acetylalanine (Ala-2). The segment covering 18–32 has biased composition (basic and acidic residues); the sequence is KSSENKESAKEEKIS. Helical transmembrane passes span 52 to 72, 161 to 178, 184 to 202, 222 to 240, 260 to 280, 292 to 310, 316 to 337, 349 to 370, 421 to 441, 466 to 486, 489 to 509, and 522 to 542; these read IFIG…YLSA, VYFY…YVTA, WLMS…WFVI, LPYF…KSNL, MMMW…LFLL, YEVY…LLQF, LVSP…QLNV, VINF…KMFV, LLPF…QVIF, IIYH…IEGL, IWIP…ELWM, and PILL…LSLW.

It belongs to the dpy-19 family. In terms of tissue distribution, widely expressed.

It localises to the membrane. In terms of biological role, probable C-mannosyltransferase that mediates C-mannosylation of tryptophan residues on target proteins. This is Probable C-mannosyltransferase DPY19L4 (DPY19L4) from Homo sapiens (Human).